The following is a 207-amino-acid chain: Guanylate kinase (207 aa).

Residues 6–185 enclose the Guanylate kinase-like domain; the sequence is GLLIVLSGPS…AKNRIQSIVE (180 aa). An ATP-binding site is contributed by 13–20; that stretch reads GPSGVGKG.

It belongs to the guanylate kinase family.

The protein resides in the cytoplasm. The enzyme catalyses GMP + ATP = GDP + ADP. Essential for recycling GMP and indirectly, cGMP. The protein is Guanylate kinase of Staphylococcus epidermidis (strain ATCC 35984 / DSM 28319 / BCRC 17069 / CCUG 31568 / BM 3577 / RP62A).